A 335-amino-acid polypeptide reads, in one-letter code: 4-hydroxythreonine-4-phosphate dehydrogenase (335 aa).

T132 is a binding site for substrate. A divalent metal cation-binding residues include H163, H208, and H263. The substrate site is built by K271, N280, and R289.

It belongs to the PdxA family. As to quaternary structure, homodimer. Zn(2+) is required as a cofactor. The cofactor is Mg(2+). Co(2+) serves as cofactor.

It localises to the cytoplasm. It carries out the reaction 4-(phosphooxy)-L-threonine + NAD(+) = 3-amino-2-oxopropyl phosphate + CO2 + NADH. It participates in cofactor biosynthesis; pyridoxine 5'-phosphate biosynthesis; pyridoxine 5'-phosphate from D-erythrose 4-phosphate: step 4/5. In terms of biological role, catalyzes the NAD(P)-dependent oxidation of 4-(phosphooxy)-L-threonine (HTP) into 2-amino-3-oxo-4-(phosphooxy)butyric acid which spontaneously decarboxylates to form 3-amino-2-oxopropyl phosphate (AHAP). This is 4-hydroxythreonine-4-phosphate dehydrogenase from Zymomonas mobilis subsp. mobilis (strain ATCC 31821 / ZM4 / CP4).